The following is a 467-amino-acid chain: UDP-N-acetylmuramate--L-alanine ligase (467 aa).

Residue 121 to 127 (GSHGKTT) participates in ATP binding.

This sequence belongs to the MurCDEF family.

Its subcellular location is the cytoplasm. It catalyses the reaction UDP-N-acetyl-alpha-D-muramate + L-alanine + ATP = UDP-N-acetyl-alpha-D-muramoyl-L-alanine + ADP + phosphate + H(+). It participates in cell wall biogenesis; peptidoglycan biosynthesis. Functionally, cell wall formation. The polypeptide is UDP-N-acetylmuramate--L-alanine ligase (Parasynechococcus marenigrum (strain WH8102)).